Here is a 339-residue protein sequence, read N- to C-terminus: N-acetyl-gamma-glutamyl-phosphate reductase (339 aa).

Residue cysteine 144 is part of the active site.

This sequence belongs to the NAGSA dehydrogenase family. Type 1 subfamily.

It is found in the cytoplasm. It carries out the reaction N-acetyl-L-glutamate 5-semialdehyde + phosphate + NADP(+) = N-acetyl-L-glutamyl 5-phosphate + NADPH + H(+). It participates in amino-acid biosynthesis; L-arginine biosynthesis; N(2)-acetyl-L-ornithine from L-glutamate: step 3/4. Functionally, catalyzes the NADPH-dependent reduction of N-acetyl-5-glutamyl phosphate to yield N-acetyl-L-glutamate 5-semialdehyde. The chain is N-acetyl-gamma-glutamyl-phosphate reductase from Methanobrevibacter smithii (strain ATCC 35061 / DSM 861 / OCM 144 / PS).